The chain runs to 208 residues: Probable hydrolase YcaC (208 aa).

C118 is an active-site residue.

As to quaternary structure, homooctamer composed of two tetrameric rings.

The chain is Probable hydrolase YcaC (ycaC) from Escherichia coli (strain K12).